The chain runs to 434 residues: Ribosomal protein uS12 methylthiotransferase RimO (434 aa).

The MTTase N-terminal domain occupies 4–122; sequence NRVDVITLGC…LISHLGKSYY (119 aa). Cysteine 13, cysteine 51, cysteine 85, cysteine 146, cysteine 150, and cysteine 153 together coordinate [4Fe-4S] cluster. A Radical SAM core domain is found at 132-363; the sequence is TTPRHYAYLK…MAVQERISAA (232 aa). The 69-residue stretch at 366–434 folds into the TRAM domain; sequence EAKIGSRLHV…PFDLYARIVD (69 aa).

It belongs to the methylthiotransferase family. RimO subfamily. Requires [4Fe-4S] cluster as cofactor.

It is found in the cytoplasm. The catalysed reaction is L-aspartate(89)-[ribosomal protein uS12]-hydrogen + (sulfur carrier)-SH + AH2 + 2 S-adenosyl-L-methionine = 3-methylsulfanyl-L-aspartate(89)-[ribosomal protein uS12]-hydrogen + (sulfur carrier)-H + 5'-deoxyadenosine + L-methionine + A + S-adenosyl-L-homocysteine + 2 H(+). Its function is as follows. Catalyzes the methylthiolation of an aspartic acid residue of ribosomal protein uS12. The chain is Ribosomal protein uS12 methylthiotransferase RimO from Porphyromonas gingivalis (strain ATCC BAA-308 / W83).